A 562-amino-acid polypeptide reads, in one-letter code: Probable sesquiterpene synthase (562 aa).

Mg(2+)-binding residues include D315, D319, and E467. The short motif at 315–319 is the DDXXD motif element; the sequence is DDIYD.

This sequence belongs to the terpene synthase family. Tpsa subfamily. The cofactor is Mg(2+). Mn(2+) serves as cofactor.

Functionally, sesquiterpene synthase. This Santalum murrayanum (Bitter quandong) protein is Probable sesquiterpene synthase (STPS).